Reading from the N-terminus, the 493-residue chain is Ribulose bisphosphate carboxylase large chain (493 aa).

The substrate site is built by Asn-132 and Thr-182. The active-site Proton acceptor is Lys-184. Residue Lys-186 coordinates substrate. Mg(2+) contacts are provided by Lys-210, Asp-212, and Glu-213. Lys-210 bears the N6-carboxylysine mark. His-302 acts as the Proton acceptor in catalysis. Residues Arg-303, His-335, and Ser-387 each coordinate substrate.

It belongs to the RuBisCO large chain family. Type I subfamily. In terms of assembly, heterohexadecamer of 8 large chains and 8 small chains. The cofactor is Mg(2+).

It catalyses the reaction 2 (2R)-3-phosphoglycerate + 2 H(+) = D-ribulose 1,5-bisphosphate + CO2 + H2O. It carries out the reaction D-ribulose 1,5-bisphosphate + O2 = 2-phosphoglycolate + (2R)-3-phosphoglycerate + 2 H(+). RuBisCO catalyzes two reactions: the carboxylation of D-ribulose 1,5-bisphosphate, the primary event in carbon dioxide fixation, as well as the oxidative fragmentation of the pentose substrate. Both reactions occur simultaneously and in competition at the same active site. The chain is Ribulose bisphosphate carboxylase large chain from Acidiphilium cryptum (strain JF-5).